A 104-amino-acid polypeptide reads, in one-letter code: Phycoerythrin alpha-2 chain, chloroplastic (104 aa).

The N-terminal 37 residues, 1-37 (MSAKIIAFSAVVATASAFAPTAGFVPRLRSGATSVNM), are a transit peptide targeting the chloroplast. At K41 the chain carries 5-hydroxylysine. C56 and R58 together coordinate 15,16-dihydrobiliverdin. Residues 61-63 (KEY) are 15,16-dihydrobiliverdin chromophore. 15,16-dihydrobiliverdin is bound at residue K78.

The protein belongs to the phycoerythrin family. Heterotetramer of 2 different alpha chains and 2 identical beta chains. The subunit composition could comprise of any combination of 2 out of 4 different alpha units with an invariant beta unit. In terms of processing, contains one covalently linked 15,16-dihydrobiliverdin chromophore.

It is found in the plastid. The protein localises to the chloroplast thylakoid membrane. Its function is as follows. Light-harvesting photosynthetic tetrapyrrole chromophore-protein from the phycobiliprotein complex. The protein is Phycoerythrin alpha-2 chain, chloroplastic (cpeA2) of Rhodomonas sp. (strain CS 24) (Chroomonas sp. (strain CS24)).